Reading from the N-terminus, the 142-residue chain is COA8 family protein Y39B6A.34, mitochondrial (142 aa).

It belongs to the COA8 family.

Its subcellular location is the mitochondrion inner membrane. Its function is as follows. May be required for cytochrome c complex (COX) assembly and function, COX being the terminal component of the mitochondrial respiratory chain. In Caenorhabditis elegans, this protein is COA8 family protein Y39B6A.34, mitochondrial.